A 215-amino-acid polypeptide reads, in one-letter code: RxLR effector protein PITG_00582 (215 aa).

An N-terminal signal peptide occupies residues 1–19 (MLPYKTLLLALGFFFTVQC). The short motif at 39 to 51 (RLLRSPEKTDEER) is the RxLR-dEER element. A coiled-coil region spans residues 81 to 149 (VAKQAKEMSN…QNELEKLAKQ (69 aa)).

It belongs to the RxLR effector family.

Its subcellular location is the secreted. The protein localises to the host cell membrane. Its function is as follows. Effector that might be involved in host plant infection. The protein is RxLR effector protein PITG_00582 of Phytophthora infestans (strain T30-4) (Potato late blight agent).